Here is a 501-residue protein sequence, read N- to C-terminus: Cilia- and flagella-associated protein 45 (501 aa).

Positions 75-114 form a coiled coil; it reads MTAEDVAAAKREAEAKREQLQAVSKARKEKMLKLEEEAKK.

The protein belongs to the CFAP45 family.

It is found in the cell projection. Its subcellular location is the cilium. The protein resides in the flagellum. The protein is Cilia- and flagella-associated protein 45 of Chlamydomonas reinhardtii (Chlamydomonas smithii).